We begin with the raw amino-acid sequence, 132 residues long: Agouti-signaling protein (132 aa).

Positions M1–S22 are cleaved as a signal peptide. An N-linked (GlcNAc...) asparagine glycan is attached at N39. The disordered stretch occupies residues I62–P85. Residues K65–M79 are compositionally biased toward basic and acidic residues. Cystine bridges form between C93/C108, C100/C114, C107/C125, C111/C132, and C116/C123. The Agouti domain maps to C93–C132.

As to expression, widely expressed at low levels. Highly expressed in the skin. Expressed in adipose tissue.

The protein resides in the secreted. Involved in the regulation of melanogenesis. The binding of ASP to MC1R precludes alpha-MSH initiated signaling and thus blocks production of cAMP, leading to a down-regulation of eumelanogenesis (brown/black pigment) and thus increasing synthesis of pheomelanin (yellow/red pigment). In higher primates, agouti may affect the quality of hair pigmentation rather than its pattern of deposition. Could well play a role in neuroendocrine aspects of melanocortin action. May have some functional role in regulating the lipid metabolism with adipocytes. In Homo sapiens (Human), this protein is Agouti-signaling protein (ASIP).